A 267-amino-acid polypeptide reads, in one-letter code: Thiazole synthase (267 aa).

Lys-107 (schiff-base intermediate with DXP) is an active-site residue. Residues Gly-168, 194–195 (AG), and 216–217 (NT) contribute to the 1-deoxy-D-xylulose 5-phosphate site.

This sequence belongs to the ThiG family. As to quaternary structure, homotetramer. Forms heterodimers with either ThiH or ThiS.

Its subcellular location is the cytoplasm. It catalyses the reaction [ThiS sulfur-carrier protein]-C-terminal-Gly-aminoethanethioate + 2-iminoacetate + 1-deoxy-D-xylulose 5-phosphate = [ThiS sulfur-carrier protein]-C-terminal Gly-Gly + 2-[(2R,5Z)-2-carboxy-4-methylthiazol-5(2H)-ylidene]ethyl phosphate + 2 H2O + H(+). It functions in the pathway cofactor biosynthesis; thiamine diphosphate biosynthesis. Functionally, catalyzes the rearrangement of 1-deoxy-D-xylulose 5-phosphate (DXP) to produce the thiazole phosphate moiety of thiamine. Sulfur is provided by the thiocarboxylate moiety of the carrier protein ThiS. In vitro, sulfur can be provided by H(2)S. The protein is Thiazole synthase of Aquifex aeolicus (strain VF5).